Here is a 352-residue protein sequence, read N- to C-terminus: Protein RecA (352 aa).

An ATP-binding site is contributed by 65–72 (GPESSGKT).

It belongs to the RecA family.

The protein resides in the cytoplasm. Can catalyze the hydrolysis of ATP in the presence of single-stranded DNA, the ATP-dependent uptake of single-stranded DNA by duplex DNA, and the ATP-dependent hybridization of homologous single-stranded DNAs. It interacts with LexA causing its activation and leading to its autocatalytic cleavage. Plays a functional role in the DNA rearrangement associated with the phenotypic switching from a pathogenic smooth to a nonpathogenic rough form in this bacterium. The chain is Protein RecA from Pseudomonas tolaasii.